Here is a 184-residue protein sequence, read N- to C-terminus: MGVIQTLDGLMNNPTPEGRVDDILRPEGDNPLLEKGFVTTSVDALLNWARTGSMWPMTFGLACCAVEMMHAGAARLDLDRYGVVFRPSPRQSDVMIVAGTLVNKMAPALRKVYDQMPDPKWVISMGSCANGGGYYHYSYSVVRGCDRVVPVDVYVPGCPPTAEALVYGILQLQKKIWRTQTIAR.

[4Fe-4S] cluster is bound by residues cysteine 63, cysteine 64, cysteine 128, and cysteine 158.

This sequence belongs to the complex I 20 kDa subunit family. In terms of assembly, NDH-1 is composed of 14 different subunits. Subunits NuoB, C, D, E, F, and G constitute the peripheral sector of the complex. The cofactor is [4Fe-4S] cluster.

It is found in the cell inner membrane. The enzyme catalyses a quinone + NADH + 5 H(+)(in) = a quinol + NAD(+) + 4 H(+)(out). Its function is as follows. NDH-1 shuttles electrons from NADH, via FMN and iron-sulfur (Fe-S) centers, to quinones in the respiratory chain. Couples the redox reaction to proton translocation (for every two electrons transferred, four hydrogen ions are translocated across the cytoplasmic membrane), and thus conserves the redox energy in a proton gradient. In Stenotrophomonas maltophilia (strain R551-3), this protein is NADH-quinone oxidoreductase subunit B.